Consider the following 876-residue polypeptide: Phosphoenolpyruvate carboxylase (876 aa).

Active-site residues include His-138 and Lys-543.

The protein belongs to the PEPCase type 1 family. Mg(2+) is required as a cofactor.

The catalysed reaction is oxaloacetate + phosphate = phosphoenolpyruvate + hydrogencarbonate. Its function is as follows. Forms oxaloacetate, a four-carbon dicarboxylic acid source for the tricarboxylic acid cycle. The sequence is that of Phosphoenolpyruvate carboxylase from Pseudomonas fluorescens (strain Pf0-1).